The following is a 59-amino-acid chain: UPF0434 protein Sputw3181_2540 (59 aa).

It belongs to the UPF0434 family.

The sequence is that of UPF0434 protein Sputw3181_2540 from Shewanella sp. (strain W3-18-1).